Consider the following 213-residue polypeptide: MLKKRIGISILDCNFGNLEEELGELKRNGVTNIHLDVMDTTFVKNITFGPCIINRILEHDFVFDVHMMVESPLDIIMQIDLERVSLVTIHSEVCDKAGVAEYLRKRNVLFGIALNPETQVDDAEMRSADFVLIMSVKPGFGGQKFQEECLAKVEEVRRYGKMVGIDGGIEMSNIGRITGADYAVVGSGYFRSGDRKKFLRDITDEFLCGSCSG.

Ser9 provides a ligand contact to substrate. The a divalent metal cation site is built by His34, Asp36, and His66. Catalysis depends on Asp36, which acts as the Proton acceptor. Substrate is bound by residues His66, 139–142 (GFGG), 166–168 (DGG), and 186–187 (GS). A divalent metal cation is bound at residue Asp166. The active-site Proton donor is the Asp166.

This sequence belongs to the ribulose-phosphate 3-epimerase family. Requires Co(2+) as cofactor. It depends on Fe(2+) as a cofactor. Mn(2+) serves as cofactor. The cofactor is Zn(2+).

It catalyses the reaction D-ribulose 5-phosphate = D-xylulose 5-phosphate. Its pathway is carbohydrate degradation; pentose phosphate pathway; D-xylulose 5-phosphate from D-ribulose 5-phosphate (non-oxidative stage): step 1/1. Its function is as follows. Catalyzes the reversible epimerization of D-ribulose 5-phosphate to D-xylulose 5-phosphate. In Encephalitozoon cuniculi (strain GB-M1) (Microsporidian parasite), this protein is Ribulose-phosphate 3-epimerase (RPE1).